The primary structure comprises 759 residues: uncharacterized protein (759 aa).

2 disordered regions span residues 1 to 31 (MDGN…TSFQ) and 188 to 211 (NDEG…PFAN). A compositionally biased stretch (low complexity) spans 17–31 (LSPLQTSFPSSTSFQ). The segment covering 189 to 207 (DEGEDVKDNEQDDNIDESD) has biased composition (acidic residues). 10 consecutive transmembrane segments (helical) span residues 434–454 (YFRT…ILPM), 456–476 (FQGG…VGIL), 486–505 (MYNS…LSRA), 517–537 (FCFS…YIVL), 555–575 (MFYA…GAAL), 597–617 (DKWK…VNQA), 620–640 (SQWP…YFTA), 643–663 (FGSN…LGNI), 670–690 (GVAF…GLAA), and 726–746 (LVMV…ALVV).

Belongs to the ThrE exporter (TC 2.A.79) family.

It localises to the endoplasmic reticulum membrane. This is an uncharacterized protein from Schizosaccharomyces pombe (strain 972 / ATCC 24843) (Fission yeast).